The sequence spans 245 residues: Thiopurine S-methyltransferase (245 aa).

An S-adenosyl-L-methionine-binding site is contributed by 29–40 (WQDKWVSHKIGF). F40 is a substrate binding site. Position 58 is an N6-acetyllysine (K58). Residues L69, E90, 134-135 (SI), and R152 each bind S-adenosyl-L-methionine.

Belongs to the class I-like SAM-binding methyltransferase superfamily. TPMT family. As to quaternary structure, monomer.

The protein localises to the cytoplasm. It catalyses the reaction S-adenosyl-L-methionine + a thiopurine = S-adenosyl-L-homocysteine + a thiopurine S-methylether.. This chain is Thiopurine S-methyltransferase (TPMT), found in Oryctolagus cuniculus (Rabbit).